Reading from the N-terminus, the 284-residue chain is Type II methyltransferase M1.LlaDCHI (284 aa).

S-adenosyl-L-methionine is bound by residues Trp-17, Lys-21, Asp-62, and Asp-194.

Belongs to the N(4)/N(6)-methyltransferase family.

The enzyme catalyses a 2'-deoxyadenosine in DNA + S-adenosyl-L-methionine = an N(6)-methyl-2'-deoxyadenosine in DNA + S-adenosyl-L-homocysteine + H(+). Functionally, an alpha subtype methylase, recognizes the double-stranded sequence 5'-GATC-3', methylates A-2 on both strands, and protects the DNA from cleavage by the LlaDCHI endonuclease. In Lactococcus lactis subsp. cremoris (Streptococcus cremoris), this protein is Type II methyltransferase M1.LlaDCHI.